A 958-amino-acid polypeptide reads, in one-letter code: Glycine dehydrogenase (decarboxylating) (958 aa).

At Lys-708 the chain carries N6-(pyridoxal phosphate)lysine.

The protein belongs to the GcvP family. The glycine cleavage system is composed of four proteins: P, T, L and H. Pyridoxal 5'-phosphate is required as a cofactor.

The catalysed reaction is N(6)-[(R)-lipoyl]-L-lysyl-[glycine-cleavage complex H protein] + glycine + H(+) = N(6)-[(R)-S(8)-aminomethyldihydrolipoyl]-L-lysyl-[glycine-cleavage complex H protein] + CO2. The glycine cleavage system catalyzes the degradation of glycine. The P protein binds the alpha-amino group of glycine through its pyridoxal phosphate cofactor; CO(2) is released and the remaining methylamine moiety is then transferred to the lipoamide cofactor of the H protein. The chain is Glycine dehydrogenase (decarboxylating) from Proteus mirabilis (strain HI4320).